The sequence spans 574 residues: Ankyrin repeat protein B18 (574 aa).

6 ANK repeats span residues 56-87 (TGYTALHCYLYNNYFTNDVLKILLNHGVDVTM), 135-164 (IKSRYMLLKEEDIDENIVSTLLDKGIDPNF), 167-213 (DGYT…NLNA), 217-249 (CGNTPFHLYLSIEMCNNIHMTKMLLTFNPNFKI), 253-285 (HGLTPILCYITSDYIQHDILVMLIHHYETNVGE), and 327-356 (EGKTLLHVACEYNNTHVIDYLIRINGDINA). The F-box domain maps to 541-574 (NCLLTLLPSEIIYEILYMLTINDLYNISYPPTKV).

The chain is Ankyrin repeat protein B18 from Vaccinia virus (strain Ankara) (VACV).